The chain runs to 426 residues: Glutamate-1-semialdehyde 2,1-aminomutase (426 aa).

Residue K265 is modified to N6-(pyridoxal phosphate)lysine.

It belongs to the class-III pyridoxal-phosphate-dependent aminotransferase family. HemL subfamily. In terms of assembly, homodimer. The cofactor is pyridoxal 5'-phosphate.

The protein resides in the cytoplasm. It catalyses the reaction (S)-4-amino-5-oxopentanoate = 5-aminolevulinate. It functions in the pathway porphyrin-containing compound metabolism; protoporphyrin-IX biosynthesis; 5-aminolevulinate from L-glutamyl-tRNA(Glu): step 2/2. The protein is Glutamate-1-semialdehyde 2,1-aminomutase of Actinobacillus pleuropneumoniae serotype 5b (strain L20).